Here is a 974-residue protein sequence, read N- to C-terminus: Kinase-interacting protein 1 (974 aa).

An NAB domain is found at 10–90; that stretch reads YSWWAASHIR…ERYDHLSKEL (81 aa). The tract at residues 151–170 is disordered; sequence STASKQKQGKQSSKIEDAAK. The stretch at 173–423 forms a coiled coil; the sequence is LSKNEAIEEI…DVVNQNSCLR (251 aa). The segment at 586–614 is disordered; it reads AQPTPAEKGDEKVSAQSGNTSVYETHTQK. The segment covering 599 to 610 has biased composition (polar residues); it reads SAQSGNTSVYET. A coiled-coil region spans residues 641 to 697; it reads NEYTAILKNYKEVTKKLSDIEKKDRDTEFELTLQTRELKSAIAKRDEEIHNLRQKLS. The tract at residues 714 to 740 is disordered; that stretch reads LLDPSDPSSARGLKPEDLPQIKDGDDE. Basic and acidic residues predominate over residues 726–736; sequence LKPEDLPQIKD. Coiled-coil stretches lie at residues 784-807 and 882-905; these read HQIQKFKTTVHDLQNEISKARDKE and AAKFQGEVLNMKHENKKVREELEA.

As to quaternary structure, homodimer or homooligomer. Interacts with PRK1. Phosphorylated by PRK1. As to expression, expressed in mature pollen grains and pollen tubes, but not in style, ovary, petal, leaf, root or sepal.

It is found in the cytoplasm. Probably involved in the receptor-like kinase-mediated signal transduction pathway. This chain is Kinase-interacting protein 1, found in Petunia integrifolia (Violet-flowered petunia).